The sequence spans 257 residues: Transmembrane protein 101 (257 aa).

The next 8 helical transmembrane spans lie at 24 to 40 (TRCPFWGCFSQLMLYAE), 52 to 72 (VPYLYFDMGAAVLCASFMSFG), 77 to 97 (WFALGAALQLAISTYTAYIGG), 110 to 130 (YSRTVAIIGGFLVLASGAGEL), 139 to 159 (SLQSTGQVFLGIYLICVAYSL), 182 to 202 (LFFVLYGVLALAFLSGYYVTL), 206 to 226 (ILAVLLPPVMLLIDGNVSYWH), and 233 to 253 (FWNQMKLLGESVGIFGAAVIL).

It is found in the membrane. Functionally, may activate NF-kappa-B signaling pathways. The polypeptide is Transmembrane protein 101 (Tmem101) (Mus musculus (Mouse)).